Reading from the N-terminus, the 327-residue chain is Pyruvate dehydrogenase E1 component subunit beta (327 aa).

Glutamate 63 contributes to the thiamine diphosphate binding site.

Heterodimer of an alpha and a beta chain. Thiamine diphosphate is required as a cofactor.

The catalysed reaction is N(6)-[(R)-lipoyl]-L-lysyl-[protein] + pyruvate + H(+) = N(6)-[(R)-S(8)-acetyldihydrolipoyl]-L-lysyl-[protein] + CO2. In terms of biological role, the pyruvate dehydrogenase complex catalyzes the overall conversion of pyruvate to acetyl-CoA and CO(2). It contains multiple copies of three enzymatic components: pyruvate dehydrogenase (E1), dihydrolipoamide acetyltransferase (E2) and lipoamide dehydrogenase (E3). This is Pyruvate dehydrogenase E1 component subunit beta (pdhB) from Mycoplasma pneumoniae (strain ATCC 29342 / M129 / Subtype 1) (Mycoplasmoides pneumoniae).